We begin with the raw amino-acid sequence, 94 residues long: Large ribosomal subunit protein bL25 (94 aa).

This sequence belongs to the bacterial ribosomal protein bL25 family. In terms of assembly, part of the 50S ribosomal subunit; part of the 5S rRNA/L5/L18/L25 subcomplex. Contacts the 5S rRNA. Binds to the 5S rRNA independently of L5 and L18.

Its function is as follows. This is one of the proteins that binds to the 5S RNA in the ribosome where it forms part of the central protuberance. The sequence is that of Large ribosomal subunit protein bL25 from Yersinia pestis bv. Antiqua (strain Antiqua).